Here is a 224-residue protein sequence, read N- to C-terminus: ATP-dependent dethiobiotin synthetase BioD (224 aa).

14-19 (GIGKTV) contributes to the ATP binding site. Threonine 18 contributes to the Mg(2+) binding site. Lysine 39 is a catalytic residue. Substrate is bound at residue serine 43. Residues aspartate 56, 117–120 (EGVG), and 177–178 (NE) each bind ATP. Mg(2+) contacts are provided by aspartate 56 and glutamate 117.

The protein belongs to the dethiobiotin synthetase family. Homodimer. The cofactor is Mg(2+).

The protein localises to the cytoplasm. It catalyses the reaction (7R,8S)-7,8-diammoniononanoate + CO2 + ATP = (4R,5S)-dethiobiotin + ADP + phosphate + 3 H(+). It participates in cofactor biosynthesis; biotin biosynthesis; biotin from 7,8-diaminononanoate: step 1/2. In terms of biological role, catalyzes a mechanistically unusual reaction, the ATP-dependent insertion of CO2 between the N7 and N8 nitrogen atoms of 7,8-diaminopelargonic acid (DAPA, also called 7,8-diammoniononanoate) to form a ureido ring. The protein is ATP-dependent dethiobiotin synthetase BioD of Xanthomonas campestris pv. campestris (strain B100).